Here is a 383-residue protein sequence, read N- to C-terminus: Na(+)/H(+) antiporter NhaA (383 aa).

Helical transmembrane passes span 10-30 (LIGG…NNSP), 56-76 (LMHW…GLEI), 91-111 (IITP…IYLS), 121-141 (GWAI…ALLG), 150-170 (LLVI…IAIF), 174-194 (SLSL…IICN), 206-226 (VVLG…ATLA), 254-274 (PWII…ISFS), 289-308 (IIWG…LAVF), 327-347 (GISL…VLAF), and 355-375 (AIKI…YIVL).

The protein belongs to the NhaA Na(+)/H(+) (TC 2.A.33) antiporter family.

The protein localises to the cell inner membrane. It catalyses the reaction Na(+)(in) + 2 H(+)(out) = Na(+)(out) + 2 H(+)(in). Its function is as follows. Na(+)/H(+) antiporter that extrudes sodium in exchange for external protons. The sequence is that of Na(+)/H(+) antiporter NhaA from Francisella tularensis subsp. holarctica (strain FTNF002-00 / FTA).